A 117-amino-acid chain; its full sequence is uncharacterized protein (117 aa).

A helical membrane pass occupies residues 1–21 (MEIAIIALFIVSIALIAFSYS). Residues 38 to 67 (LSAMQEIYKLKKKMTVLEEELLETNLVIRK) are a coiled coil.

Its subcellular location is the cell membrane. This is an uncharacterized protein from Bacillus subtilis (strain 168).